The primary structure comprises 379 residues: Cell division protein FtsZ (379 aa).

GTP is bound by residues G18–N22, G105–G107, E136, R140, and D184.

Belongs to the FtsZ family. In terms of assembly, homodimer. Polymerizes to form a dynamic ring structure in a strictly GTP-dependent manner. Interacts directly with several other division proteins.

Its subcellular location is the cytoplasm. Functionally, essential cell division protein that forms a contractile ring structure (Z ring) at the future cell division site. The regulation of the ring assembly controls the timing and the location of cell division. One of the functions of the FtsZ ring is to recruit other cell division proteins to the septum to produce a new cell wall between the dividing cells. Binds GTP and shows GTPase activity. This chain is Cell division protein FtsZ, found in Mycobacterium leprae (strain TN).